A 409-amino-acid chain; its full sequence is Elongation factor Tu (409 aa).

Residues 10 to 214 (KPHVNIGTIG…AVDAYIPTPE (205 aa)) enclose the tr-type G domain. A G1 region spans residues 19–26 (GHVDHGKT). Position 19–26 (19–26 (GHVDHGKT)) interacts with GTP. Thr-26 contributes to the Mg(2+) binding site. The interval 60–64 (GITIN) is G2. Residues 81–84 (DCPG) are G3. GTP-binding positions include 81–85 (DCPGH) and 136–139 (NKKD). The tract at residues 136–139 (NKKD) is G4. The G5 stretch occupies residues 174-176 (SAL).

Belongs to the TRAFAC class translation factor GTPase superfamily. Classic translation factor GTPase family. EF-Tu/EF-1A subfamily. Monomer.

The protein localises to the cytoplasm. It carries out the reaction GTP + H2O = GDP + phosphate + H(+). Its function is as follows. GTP hydrolase that promotes the GTP-dependent binding of aminoacyl-tRNA to the A-site of ribosomes during protein biosynthesis. The chain is Elongation factor Tu from Gloeobacter violaceus (strain ATCC 29082 / PCC 7421).